A 100-amino-acid polypeptide reads, in one-letter code: Large ribosomal subunit protein uL23 (100 aa).

This sequence belongs to the universal ribosomal protein uL23 family. As to quaternary structure, part of the 50S ribosomal subunit. Contacts protein L29, and trigger factor when it is bound to the ribosome.

Its function is as follows. One of the early assembly proteins it binds 23S rRNA. One of the proteins that surrounds the polypeptide exit tunnel on the outside of the ribosome. Forms the main docking site for trigger factor binding to the ribosome. The sequence is that of Large ribosomal subunit protein uL23 from Corynebacterium aurimucosum (strain ATCC 700975 / DSM 44827 / CIP 107346 / CN-1) (Corynebacterium nigricans).